Here is a 631-residue protein sequence, read N- to C-terminus: UvrABC system protein C (631 aa).

In terms of domain architecture, GIY-YIG spans 26 to 105; sequence SSPGVYQFKN…IKELKPRYNV (80 aa). The region spanning 219–254 is the UVR domain; the sequence is SATIRSLNERMLSFAKELKFEQAAELKTQIDSLKRY.

The protein belongs to the UvrC family. As to quaternary structure, interacts with UvrB in an incision complex.

Its subcellular location is the cytoplasm. The UvrABC repair system catalyzes the recognition and processing of DNA lesions. UvrC both incises the 5' and 3' sides of the lesion. The N-terminal half is responsible for the 3' incision and the C-terminal half is responsible for the 5' incision. In Chlorobium phaeobacteroides (strain DSM 266 / SMG 266 / 2430), this protein is UvrABC system protein C.